The following is a 231-amino-acid chain: MQVVVPFAATEPKTRLADVLTPAERTAFARAMLADVLTAVVEAGHEPTVLATAPLDLETLDLEAAVRDAGSVAVDDRPLTEAVNARLPERGDGGDDGTHIDPVAVVMADLALATADALEALFSAAADVAVVPGRGAGTNALVVDHPEFRVDYHGASYLDHREIAHDVGATLETVDSFRLGTDIDEPADLVEVLVHGTETDRAPARLREFGFELERTDGRVTVARLEESRPK.

The protein belongs to the CofC family. As to quaternary structure, homodimer.

The catalysed reaction is (2S)-2-phospholactate + GTP + H(+) = (2S)-lactyl-2-diphospho-5'-guanosine + diphosphate. The protein operates within cofactor biosynthesis; coenzyme F420 biosynthesis. Functionally, guanylyltransferase that catalyzes the activation of (2S)-2-phospholactate (2-PL) as (2S)-lactyl-2-diphospho-5'-guanosine, via the condensation of 2-PL with GTP. It is involved in the biosynthesis of coenzyme F420, a hydride carrier cofactor. The chain is 2-phospho-L-lactate guanylyltransferase from Haloterrigena turkmenica (strain ATCC 51198 / DSM 5511 / JCM 9101 / NCIMB 13204 / VKM B-1734 / 4k) (Halococcus turkmenicus).